Here is a 175-residue protein sequence, read N- to C-terminus: uncharacterized protein (175 aa).

Polar residues predominate over residues 1-14 (MNTSSRIQLPSSND). Disordered stretches follow at residues 1-31 (MNTS…SKRS) and 127-175 (ARSR…QSKR). Positions 16-27 (HVYDGRSNEPKA) are enriched in basic and acidic residues. Low complexity predominate over residues 130-149 (RASSVSNSRLNSRTNSSVSL). Polar residues predominate over residues 154 to 175 (GSSSWKNKIKNAVSNVTDQSKR).

The protein localises to the cytoplasm. It localises to the nucleus. This is an uncharacterized protein from Schizosaccharomyces pombe (strain 972 / ATCC 24843) (Fission yeast).